Consider the following 425-residue polypeptide: Phosphomethylpyrimidine synthase (425 aa).

Residues Met94, Tyr123, His162, 184–186 (SRG), 225–228 (NGMR), and Glu264 contribute to the substrate site. Zn(2+) is bound at residue His268. Tyr291 is a substrate binding site. Residue His332 participates in Zn(2+) binding. [4Fe-4S] cluster-binding residues include Cys407, Cys410, and Cys414.

The protein belongs to the ThiC family. [4Fe-4S] cluster serves as cofactor.

The enzyme catalyses 5-amino-1-(5-phospho-beta-D-ribosyl)imidazole + S-adenosyl-L-methionine = 4-amino-2-methyl-5-(phosphooxymethyl)pyrimidine + CO + 5'-deoxyadenosine + formate + L-methionine + 3 H(+). It functions in the pathway cofactor biosynthesis; thiamine diphosphate biosynthesis. In terms of biological role, catalyzes the synthesis of the hydroxymethylpyrimidine phosphate (HMP-P) moiety of thiamine from aminoimidazole ribotide (AIR) in a radical S-adenosyl-L-methionine (SAM)-dependent reaction. The protein is Phosphomethylpyrimidine synthase of Methanoregula boonei (strain DSM 21154 / JCM 14090 / 6A8).